The chain runs to 1046 residues: Multidrug resistance protein MexB (1046 aa).

The Cytoplasmic portion of the chain corresponds to 1–9 (MSKFFIDRP). Residues 10 to 28 (IFAWVIALVIMLAGGLSIL) traverse the membrane as a helical segment. Over 29–339 (SLPVNQYPAI…TPVVSASIHE (311 aa)) the chain is Periplasmic. A helical transmembrane segment spans residues 340 to 359 (VVKTLGEAILLVFLVMYLFL). Over 360 to 365 (QNFRAT) the chain is Cytoplasmic. The helical transmembrane segment at 366–385 (LIPTIAVPVVLLGTFGVLAA) threads the bilayer. Over 386 to 391 (FGFSIN) the chain is Periplasmic. A helical membrane pass occupies residues 392–413 (TLTMFGMVLAIGLLVDDAIVVV). At 414–441 (ENVERVMAEEGLSPREAARKSMGQIQGA) the chain is on the cytoplasmic side. A helical transmembrane segment spans residues 442–460 (LVGIAMVLSAVFLPMAFFG). At 461–473 (GSTGVIYRQFSIT) the chain is on the periplasmic side. Residues 474 to 496 (IVSAMALSVIVALILTPALCATM) traverse the membrane as a helical segment. The Cytoplasmic segment spans residues 497-538 (LKPIEKGDHGEHKGGFFGWFNRMFLSTTHGYERGVASILKHR). A helical transmembrane segment spans residues 539–557 (APYLLIYVVIVAGMIWMFT). Topologically, residues 558-871 (RIPTAFLPDE…SYEERLSGSQ (314 aa)) are periplasmic. The chain crosses the membrane as a helical span at residues 872 to 891 (APALYALSLLVVFLCLAALY). At 892–897 (ESWSIP) the chain is on the cytoplasmic side. Residues 898-917 (FSVMLVVPLGVIGALLATSM) traverse the membrane as a helical segment. At 918 to 923 (RGLSND) the chain is on the periplasmic side. A helical transmembrane segment spans residues 924–945 (VFFQVGLLTTIGLSAKNAILIV). Topologically, residues 946–972 (EFAKELHEQGKGIVEAAIEACRMRLRP) are cytoplasmic. A helical membrane pass occupies residues 973-991 (IVMTSLAFILGVVPLAIST). Residues 992–1004 (GAGSGSQHAIGTG) are Periplasmic-facing. A helical transmembrane segment spans residues 1005 to 1027 (VIGGMVTATVLAIFWVPLFYVAV). At 1028–1046 (STLFKDEASKQQASVEKGQ) the chain is on the cytoplasmic side.

The protein belongs to the resistance-nodulation-cell division (RND) (TC 2.A.6) family. In terms of assembly, component of the MexAB-OprM multidrug efflux complex, composed of six MexA subunits forming a hexameric tube, binding to a MexB trimer, which interact with the trimeric OprM outer membrane channel protein. OprM is thought to not directly contact MexB; instead, MexA joins MexB and OprM by forming a funnel-like hexamer anchored to the inner membrane. MexA may initially form a hexameric ring complex with MexB prior to OprM, then OprM undergoes a conformational change as it contacts MexA, allowing the periplasmic gate to open. It is thought that, under high intracellular substrate concentration, MexB ejects substrate into the tunnel formed by MexA-OprM; as the substrate level declines, conformational changes in MexB cause efflux to reduce and stop and the complex shifts to the closed state. Acts as a substrate:proton antiporter and activity is enhanced significantly when in complex with MexA and OprM, in vitro.

Its subcellular location is the cell inner membrane. With respect to regulation, export of antibiotics and solvents is dramatically decreased in the presence of the protonophore carbonyl cyanide m-chlorophenylhydrazone (CCCP), therefore may be driven by a proton gradient. Antibiotic efflux is inhibited by pyridopyrimidine derivatives, such as ABI-PP, acting by binding to a hydrophobic pocket in MexB. Functionally, the inner membrane transporter component of the MexAB-OprM efflux system that confers multidrug resistance. Functions as the major efflux pump for n-hexane and p-xylene efflux. Has been shown in one study to be involved in the active efflux of the autoinducer N-(3-oxododecanoyl) homoserine lactone, thereby playing an indirect role in quorum-sensing; but has been shown in another study not to be involved in efflux of this autoinducer. Over-expression of the pump increases antibiotic and solvent efflux capacities. Implicated in the secretion of the siderophore pyoverdine. The sequence is that of Multidrug resistance protein MexB (mexB) from Pseudomonas aeruginosa (strain ATCC 15692 / DSM 22644 / CIP 104116 / JCM 14847 / LMG 12228 / 1C / PRS 101 / PAO1).